Reading from the N-terminus, the 874-residue chain is Alanine--tRNA ligase (874 aa).

Zn(2+)-binding residues include His563, His567, Cys665, and His669.

This sequence belongs to the class-II aminoacyl-tRNA synthetase family. Requires Zn(2+) as cofactor.

It localises to the cytoplasm. The catalysed reaction is tRNA(Ala) + L-alanine + ATP = L-alanyl-tRNA(Ala) + AMP + diphosphate. Functionally, catalyzes the attachment of alanine to tRNA(Ala) in a two-step reaction: alanine is first activated by ATP to form Ala-AMP and then transferred to the acceptor end of tRNA(Ala). Also edits incorrectly charged Ser-tRNA(Ala) and Gly-tRNA(Ala) via its editing domain. This is Alanine--tRNA ligase from Haemophilus ducreyi (strain 35000HP / ATCC 700724).